A 345-amino-acid polypeptide reads, in one-letter code: WD40 repeat protein poxJ (345 aa).

WD repeat units follow at residues 15–49 (ANPP…YDVS), 59–100 (LFNF…EAQQ), 101–146 (VAAH…PLAT), and 250–284 (VNDV…RLKS).

Belongs to the WD repeat rae1 family.

The protein operates within secondary metabolite biosynthesis. Its function is as follows. WD40 repeat protein; part of the gene cluster that mediates the biosynthesis of oxaleimides, cytotoxic compounds containing an unusual disubstituted succinimide moiety. The first step of the pathway is provided by the HR-PKS poxF that serves in a new mode of collaborative biosynthesis with the PKS-NRPS poxE, by providing the olefin containing amino acid substrate via the synthesis of an ACP-bound dec-4-enoate. The cytochrome P450 monooxygenase poxM-catalyzed oxidation at the alpha-position creates the enzyme-bound 2-hydroxydec-4-enoyl-ACP thioester, which may be prone to spontaneous hydrolysis to yield 2-hydroxydec-4-enoic acid due to increased electrophilicity of the carbonyl. 2-hydroxydec-4-enoic acid can then be further oxidized by poxM to yield the alpha-ketoacid 2-oxodec-4-enoicacid, which is reductively aminated by the aminotransferase poxL to yield (S,E)-2-aminodec-4-enoic acid. The Hybrid PKS-NRPS synthetase poxE then performs condensation between the octaketide product of its PKS modules and the amino group of (S,E)-2-aminodec-4-enoic acid which is activated and incorporated by the adenylation domain. The resulting aminoacyl product can be cyclized by the Diels-Alderase PoxQ and reductively released by the reductive (R) domain of poxE to yield an aldehyde intermediate. The released aldehyde is then substrate for a Knoevenagel condensation by the hydrolyase poxO followed by an oxidation at the 5-position of the pyrrolidone ring. The presence of the olefin from the amino acid building block allows for migration of the substituted allyl group to occur. This allylic transposition reaction takes place in a conjugate addition, semipinacol-like fashion to yield a succinimide intermediate. Iterative two-electron oxidations of the C7 methyl of the succinimide intermediate to the carboxylic acid can be catalyzed by one of two remaining cytochrome P450 monooxygenasess poxC or poxD to yield oxaleimide A. Subsequent oxidation yields the maleimide scaffold oxaleimide I. Both oxaleimide A and oxaleimide I can undergo oxidative modifications in the decalin ring to yield the series of products oxaleimides B to H. The protein is WD40 repeat protein poxJ of Penicillium oxalicum (strain 114-2 / CGMCC 5302) (Penicillium decumbens).